Here is a 446-residue protein sequence, read N- to C-terminus: Carbamoyl phosphate synthase small chain, chloroplastic (446 aa).

Over residues 1 to 32 the composition is skewed to low complexity; that stretch reads MAAPPATASAPSLRPSAASPRAAAARSVAVPS. Residues 1 to 44 form a disordered region; the sequence is MAAPPATASAPSLRPSAASPRAAAARSVAVPSGPRTVGPRRDGG. A chloroplast-targeting transit peptide spans 1-50; it reads MAAPPATASAPSLRPSAASPRAAAARSVAVPSGPRTVGPRRDGGRFLGVR. Residues 261–446 form the Glutamine amidotransferase type-1 domain; the sequence is HVVAYDFGIK…FIEMMKNNRL (186 aa). The active-site Nucleophile is Cys-336. Catalysis depends on residues His-420 and Glu-422.

The protein belongs to the CarA family. Heterodimer composed of 2 chains; the small (or glutamine) chain promotes the hydrolysis of glutamine to ammonia, which is used by the large (or ammonia) chain to synthesize carbamoyl phosphate.

Its subcellular location is the plastid. The protein resides in the chloroplast. The catalysed reaction is hydrogencarbonate + L-glutamine + 2 ATP + H2O = carbamoyl phosphate + L-glutamate + 2 ADP + phosphate + 2 H(+). It carries out the reaction L-glutamine + H2O = L-glutamate + NH4(+). The protein operates within amino-acid biosynthesis; L-arginine biosynthesis; carbamoyl phosphate from bicarbonate: step 1/1. It participates in pyrimidine metabolism; UMP biosynthesis via de novo pathway; (S)-dihydroorotate from bicarbonate: step 1/3. In terms of biological role, small subunit of the arginine-specific carbamoyl phosphate synthase (CPSase). CPSase catalyzes the formation of carbamoyl phosphate from the ammonia moiety of glutamine, carbonate, and phosphate donated by ATP, the first step of the arginine biosynthetic pathway. The small subunit (glutamine amidotransferase) binds and cleaves glutamine to supply the large subunit with the substrate ammonia. The polypeptide is Carbamoyl phosphate synthase small chain, chloroplastic (CARA) (Oryza sativa subsp. japonica (Rice)).